Here is a 74-residue protein sequence, read N- to C-terminus: Kappa-scoloptoxin(07)-Ssm2d (74 aa).

An N-terminal signal peptide occupies residues 1 to 19 (MLVFYALLFVTVFSNTVMG). A propeptide spanning residues 20–41 (ATIDKPIPKPILREAIEEIEVN) is cleaved from the precursor.

This sequence belongs to the scoloptoxin-07 family. Post-translationally, contains 3 disulfide bonds. Expressed by the venom gland.

The protein resides in the secreted. Functionally, inhibits voltage-gated potassium channels. This chain is Kappa-scoloptoxin(07)-Ssm2d, found in Scolopendra mutilans (Chinese red-headed centipede).